Consider the following 376-residue polypeptide: Metal tolerance protein 6 (376 aa).

Residues 1-28 are disordered; it reads MAAAAGVAAGTGRGSGEGEELLPNAVEG. At 1-123 the chain is on the cytoplasmic side; it reads MAAAAGVAAG…CEKVARSEAL (123 aa). Residues 124-144 form a helical membrane-spanning segment; it reads AIRLSNIANMVLFAAKVYASI. The Vacuolar portion of the chain corresponds to 145-149; sequence RSGSL. A helical transmembrane segment spans residues 150 to 170; sequence AIIASTLDSLLDLLSGFILWF. Residues 171–191 lie on the Cytoplasmic side of the membrane; the sequence is TAFSKKTSNPYRYPIGKRRMQ. A helical transmembrane segment spans residues 192-212; the sequence is PLGILVFASVMATLGLQIILE. The Vacuolar segment spans residues 213-231; sequence STRSLFYDGDTFRLTKEQE. Residues 232-252 traverse the membrane as a helical segment; the sequence is KWVVDIMLSVTSVKLLLVVYC. The Cytoplasmic segment spans residues 253–376; that stretch reads RSFTNEILAI…PEHARSHDTL (124 aa).

Belongs to the cation diffusion facilitator (CDF) transporter (TC 2.A.4) family. SLC30A subfamily.

The protein localises to the vacuole membrane. Functionally, involved in sequestration of excess metal in the cytoplasm into vacuoles to maintain metal homeostasis. The chain is Metal tolerance protein 6 (MTP6) from Oryza sativa subsp. japonica (Rice).